The primary structure comprises 258 residues: Regulatory protein RecX (258 aa).

This sequence belongs to the RecX family.

The protein resides in the cytoplasm. Functionally, modulates RecA activity. The protein is Regulatory protein RecX of Streptococcus thermophilus (strain CNRZ 1066).